Reading from the N-terminus, the 448-residue chain is Fibulin-5 (448 aa).

Positions 1–23 (MPGFKRILTVTVLALCLPTPGNA) are cleaved as a signal peptide. Residues 42-82 (DVDECRTIPEACRGDMMCVNQNGGYLCIPRTNPVYRGPYSN) enclose the EGF-like 1; calcium-binding domain. Cystine bridges form between cysteine 46–cysteine 59, cysteine 53–cysteine 68, cysteine 131–cysteine 144, cysteine 138–cysteine 153, cysteine 155–cysteine 166, cysteine 172–cysteine 181, cysteine 177–cysteine 190, cysteine 192–cysteine 205, cysteine 211–cysteine 221, cysteine 217–cysteine 230, cysteine 232–cysteine 245, cysteine 251–cysteine 262, cysteine 258–cysteine 271, cysteine 273–cysteine 286, cysteine 292–cysteine 305, cysteine 299–cysteine 314, and cysteine 320–cysteine 332. The Cell attachment site signature appears at 54 to 56 (RGD). The EGF-like 2; calcium-binding domain occupies 127 to 167 (DVDECATDSHQCNPTQICINTEGGYTCSCTDGYWLLEGQCL). One can recognise an EGF-like 3; calcium-binding domain in the interval 168 to 206 (DIDECRYGYCQQLCANVPGSYSCTCNPGFTLNEDGRSCQ). The region spanning 207-246 (DVNECATENPCVQTCVNTYGSFICRCDPGYELEDDGVHCS) is the EGF-like 4; calcium-binding domain. The segment at 245-448 (CSDMDECSFS…LRIYVSQYPF (204 aa)) is interaction with LOXL1. An EGF-like 5; calcium-binding domain is found at 247 to 287 (DMDECSFSEFLCQHECVNQPGTYFCSCPAGYILLDDNRSCQ). 2 N-linked (GlcNAc...) asparagine glycosylation sites follow: asparagine 283 and asparagine 296. The EGF-like 6; calcium-binding domain occupies 288-333 (DINECEHRNHTCILQQTCYNLQGGFKCIDPIRCEEPYLRISDNRCM).

This sequence belongs to the fibulin family. As to quaternary structure, homodimer. Monomer, homodimerizes in presence of Ca(2+). Interacts with ELN. Interacts (via N-terminus) with the integrins ITGAV/ITGB3, ITGAV/ITGB5 and ITGA9/ITGB1. Interacts with FBN1 (via N-terminal domain). Forms a ternary complex with ELN and FBN1. Interacts with EFEMP2 with moderate affinity. Interacts with LOXL1. N-glycosylated.

It localises to the secreted. The protein resides in the extracellular space. The protein localises to the extracellular matrix. Essential for elastic fiber formation, is involved in the assembly of continuous elastin (ELN) polymer and promotes the interaction of microfibrils and ELN. Stabilizes and organizes elastic fibers in the skin, lung and vasculature. Promotes adhesion of endothelial cells through interaction of integrins and the RGD motif. Vascular ligand for integrin receptors which may play a role in vascular development and remodeling. May act as an adapter that mediates the interaction between FBN1 and ELN. This is Fibulin-5 (FBLN5) from Bos taurus (Bovine).